Consider the following 210-residue polypeptide: dTTP/UTP pyrophosphatase (210 aa).

Asp80 acts as the Proton acceptor in catalysis.

Belongs to the Maf family. YhdE subfamily. It depends on a divalent metal cation as a cofactor.

It is found in the cytoplasm. The catalysed reaction is dTTP + H2O = dTMP + diphosphate + H(+). It carries out the reaction UTP + H2O = UMP + diphosphate + H(+). In terms of biological role, nucleoside triphosphate pyrophosphatase that hydrolyzes dTTP and UTP. May have a dual role in cell division arrest and in preventing the incorporation of modified nucleotides into cellular nucleic acids. The sequence is that of dTTP/UTP pyrophosphatase from Nitratidesulfovibrio vulgaris (strain ATCC 29579 / DSM 644 / CCUG 34227 / NCIMB 8303 / VKM B-1760 / Hildenborough) (Desulfovibrio vulgaris).